Here is a 240-residue protein sequence, read N- to C-terminus: MEEKLLYAGKAKEMWTTEDEDQLRVVYLDQATQLNGKQKEHFAGKGAAAHAISDLVFHYLIDHGIETHFIKKLSATEDLVEKCAMVPLEFVTRNTVAGHFASRFGLEEGTALPQPVEENFYKDDELDDPFINESAAVALKMVTPAEFDRCWAICRQVDQLLTPLFEKAGMQLVDFKLEFGRRSRDNQIILADEFSPDNCRLWDTTTHHHLDKDVFRRNLADLTATYQEVYARLQAALKED.

The protein belongs to the SAICAR synthetase family.

The catalysed reaction is 5-amino-1-(5-phospho-D-ribosyl)imidazole-4-carboxylate + L-aspartate + ATP = (2S)-2-[5-amino-1-(5-phospho-beta-D-ribosyl)imidazole-4-carboxamido]succinate + ADP + phosphate + 2 H(+). It participates in purine metabolism; IMP biosynthesis via de novo pathway; 5-amino-1-(5-phospho-D-ribosyl)imidazole-4-carboxamide from 5-amino-1-(5-phospho-D-ribosyl)imidazole-4-carboxylate: step 1/2. The chain is Phosphoribosylaminoimidazole-succinocarboxamide synthase from Limosilactobacillus fermentum (strain NBRC 3956 / LMG 18251) (Lactobacillus fermentum).